The sequence spans 680 residues: NADPH--cytochrome P450 reductase (680 aa).

Residues 1-5 (MALDK) are Lumenal-facing. The helical transmembrane segment at 6–23 (LDLYVIITLVVAIAAYFA) threads the bilayer. Over 24–680 (KNQFLDQQQD…VQNRYQEDVW (657 aa)) the chain is Cytoplasmic. The 145-residue stretch at 60–204 (TLLLFGSQTG…DFLAWKDNVF (145 aa)) folds into the Flavodoxin-like domain. Residues 66 to 71 (SQTGTA), 117 to 120 (ATYG), 152 to 161 (LGNSTYEFFN), and Asp187 each bind FMN. An FAD-binding FR-type domain is found at 264–509 (THPFLARIVK…NGPRGKFSKF (246 aa)). Arg283 is a binding site for NADP(+). FAD-binding positions include 439–442 (RYYS), 457–459 (TAV), and 473–476 (GVVT). NADP(+) contacts are provided by residues Thr537, 599 to 600 (SR), 606 to 610 (KVYVQ), and Asp642. Position 680 (Trp680) interacts with FAD.

This sequence belongs to the NADPH--cytochrome P450 reductase family. It in the N-terminal section; belongs to the flavodoxin family. In the C-terminal section; belongs to the flavoprotein pyridine nucleotide cytochrome reductase family. Requires FAD as cofactor. The cofactor is FMN.

The protein localises to the endoplasmic reticulum membrane. It is found in the mitochondrion outer membrane. The protein resides in the cell membrane. The catalysed reaction is 2 oxidized [cytochrome P450] + NADPH = 2 reduced [cytochrome P450] + NADP(+) + H(+). Its function is as follows. This enzyme is required for electron transfer from NADP to cytochrome P450 in microsomes. It can also provide electron transfer to heme oxygenase and cytochrome B5. Involved in ergosterol biosynthesis. This is NADPH--cytochrome P450 reductase from Candida tropicalis (Yeast).